The sequence spans 245 residues: MNFPYRNIVVLTGAGISAESGIQTFRAQDGLWENHRIEDVATPEGFARDPDLVQDFYNQRRKKLQDPNIEPNAAHLALGRLEAELDGQVTIVTQNIDNLHERGGNKNIIHMHGELLKSRCSVSNQVIEETGDILTGDLCHCCQMPSQMRPHVVWFGEMPLRMGEIYSALETADLFISIGTSGVVYPAAGFVHDAKMHGAHTIEINLEPSAIESEFVEKRYGKASVEVPKLVEELLAHLESNVESA.

Positions 1–237 (MNFPYRNIVV…PKLVEELLAH (237 aa)) constitute a Deacetylase sirtuin-type domain. An NAD(+)-binding site is contributed by 13–32 (GAGISAESGIQTFRAQDGLW). The substrate site is built by tyrosine 57 and arginine 60. 94–97 (QNID) contacts NAD(+). The active-site Proton acceptor is the histidine 112. Zn(2+)-binding residues include cysteine 120 and cysteine 139. Residues 179–181 (GTS), 205–207 (NLE), and alanine 223 contribute to the NAD(+) site.

Belongs to the sirtuin family. Class III subfamily. It depends on Zn(2+) as a cofactor.

It is found in the cytoplasm. The enzyme catalyses N(6)-acetyl-L-lysyl-[protein] + NAD(+) + H2O = 2''-O-acetyl-ADP-D-ribose + nicotinamide + L-lysyl-[protein]. It carries out the reaction N(6)-succinyl-L-lysyl-[protein] + NAD(+) + H2O = 2''-O-succinyl-ADP-D-ribose + nicotinamide + L-lysyl-[protein]. Functionally, NAD-dependent lysine deacetylase and desuccinylase that specifically removes acetyl and succinyl groups on target proteins. Modulates the activities of several proteins which are inactive in their acylated form. The polypeptide is NAD-dependent protein deacylase (Vibrio vulnificus (strain CMCP6)).